Here is a 104-residue protein sequence, read N- to C-terminus: DNA-directed RNA polymerase subunit omega (104 aa).

It belongs to the RNA polymerase subunit omega family. As to quaternary structure, the RNAP catalytic core consists of 2 alpha, 1 beta, 1 beta' and 1 omega subunit. When a sigma factor is associated with the core the holoenzyme is formed, which can initiate transcription.

The catalysed reaction is RNA(n) + a ribonucleoside 5'-triphosphate = RNA(n+1) + diphosphate. In terms of biological role, promotes RNA polymerase assembly. Latches the N- and C-terminal regions of the beta' subunit thereby facilitating its interaction with the beta and alpha subunits. The chain is DNA-directed RNA polymerase subunit omega from Streptococcus agalactiae serotype Ia (strain ATCC 27591 / A909 / CDC SS700).